Consider the following 322-residue polypeptide: Mas-related G-protein coupled receptor member B5 (322 aa).

Topologically, residues 1-34 are extracellular; that stretch reads MGLTTPAWNINNTVVNGSNNTEHFSCVSKFNTLN. N-linked (GlcNAc...) asparagine glycans are attached at residues Asn11, Asn16, and Asn19. A helical membrane pass occupies residues 35–55; that stretch reads FLTVIIAMFGLAGNAIVLWLL. At 56–70 the chain is on the cytoplasmic side; sequence AFHLPRNAFSVYVCN. Residues 71 to 91 form a helical membrane-spanning segment; the sequence is LACADFLQLCTQILGSLECFL. The Extracellular segment spans residues 92–98; the sequence is QLNRRHT. The helical transmembrane segment at 99 to 119 threads the bilayer; it reads FFLTVVFMFAYLAGLCMIAAI. Over 120-147 the chain is Cytoplasmic; the sequence is SVERSLSVMWPIWYHCQRPRHTSSIMCA. A helical transmembrane segment spans residues 148–168; that stretch reads LLWAFCLLLNFLLGEGCGLLF. Residues 169 to 172 lie on the Extracellular side of the membrane; sequence SDPK. A helical transmembrane segment spans residues 173 to 193; it reads YYFCITCALITTALIILLTVV. Residues 194-216 lie on the Cytoplasmic side of the membrane; that stretch reads PSVSSLALLVKMICGSHRIPVTR. The chain crosses the membrane as a helical span at residues 217–237; the sequence is FYVTIALTLVVFIFLGLPFGI. Over 238 to 260 the chain is Extracellular; sequence YSSFLIMFKEFQSIFSYHVLEVT. A helical transmembrane segment spans residues 261–281; sequence IFLSCVNSCANPIIYFLVGSI. Over 282-322 the chain is Cytoplasmic; it reads RQHRLQWQSLKLLLQRAMQDTPEEDSGERVPSQRSGELESV. The segment at 302-322 is disordered; the sequence is TPEEDSGERVPSQRSGELESV.

Belongs to the G-protein coupled receptor 1 family. Mas subfamily.

Its subcellular location is the membrane. Its function is as follows. Orphan receptor. Probably involved in the function of nociceptive neurons. May regulate nociceptor function and/or development, including the sensation or modulation of pain. In Mus musculus (Mouse), this protein is Mas-related G-protein coupled receptor member B5 (Mrgprb5).